Here is a 101-residue protein sequence, read N- to C-terminus: Urease subunit beta (101 aa).

The protein belongs to the urease beta subunit family. Heterotrimer of UreA (gamma), UreB (beta) and UreC (alpha) subunits. Three heterotrimers associate to form the active enzyme.

The protein localises to the cytoplasm. It catalyses the reaction urea + 2 H2O + H(+) = hydrogencarbonate + 2 NH4(+). It participates in nitrogen metabolism; urea degradation; CO(2) and NH(3) from urea (urease route): step 1/1. This chain is Urease subunit beta, found in Burkholderia orbicola (strain AU 1054).